Reading from the N-terminus, the 280-residue chain is UPF0750 membrane protein YitT (280 aa).

The next 4 membrane-spanning stretches (helical) occupy residues 9–29 (LLIVIIGALLNAAGLNLFLIP), 54–74 (FYISTGTLLFLLNIPVGILGW), 80–100 (SFTVYSILSVALTTLFMGILP), and 151–171 (VGTYFFILNGIIILTAGLLQG).

It belongs to the UPF0750 family.

The protein resides in the cell membrane. In Bacillus subtilis (strain 168), this protein is UPF0750 membrane protein YitT (yitT).